The primary structure comprises 443 residues: Ribosomal protein uS12 methylthiotransferase RimO (443 aa).

Residues 5–116 (PTIAINHLGC…IVDIIRRTEQ (112 aa)) form the MTTase N-terminal domain. [4Fe-4S] cluster is bound by residues cysteine 14, cysteine 50, cysteine 79, cysteine 154, cysteine 158, and cysteine 161. In terms of domain architecture, Radical SAM core spans 140-369 (TTNEAIAYLR…MALQQPISAQ (230 aa)). In terms of domain architecture, TRAM spans 372–438 (AACLGQTLDV…DYDLYGMTAE (67 aa)).

It belongs to the methylthiotransferase family. RimO subfamily. It depends on [4Fe-4S] cluster as a cofactor.

Its subcellular location is the cytoplasm. It carries out the reaction L-aspartate(89)-[ribosomal protein uS12]-hydrogen + (sulfur carrier)-SH + AH2 + 2 S-adenosyl-L-methionine = 3-methylsulfanyl-L-aspartate(89)-[ribosomal protein uS12]-hydrogen + (sulfur carrier)-H + 5'-deoxyadenosine + L-methionine + A + S-adenosyl-L-homocysteine + 2 H(+). In terms of biological role, catalyzes the methylthiolation of an aspartic acid residue of ribosomal protein uS12. In Synechocystis sp. (strain ATCC 27184 / PCC 6803 / Kazusa), this protein is Ribosomal protein uS12 methylthiotransferase RimO.